Reading from the N-terminus, the 282-residue chain is Bis(5'-nucleosyl)-tetraphosphatase, symmetrical (282 aa).

This sequence belongs to the Ap4A hydrolase family.

It carries out the reaction P(1),P(4)-bis(5'-adenosyl) tetraphosphate + H2O = 2 ADP + 2 H(+). Functionally, hydrolyzes diadenosine 5',5'''-P1,P4-tetraphosphate to yield ADP. The sequence is that of Bis(5'-nucleosyl)-tetraphosphatase, symmetrical from Paraburkholderia phymatum (strain DSM 17167 / CIP 108236 / LMG 21445 / STM815) (Burkholderia phymatum).